The chain runs to 350 residues: S-adenosylmethionine:tRNA ribosyltransferase-isomerase (350 aa).

It belongs to the QueA family. As to quaternary structure, monomer.

The protein localises to the cytoplasm. The catalysed reaction is 7-aminomethyl-7-carbaguanosine(34) in tRNA + S-adenosyl-L-methionine = epoxyqueuosine(34) in tRNA + adenine + L-methionine + 2 H(+). Its pathway is tRNA modification; tRNA-queuosine biosynthesis. In terms of biological role, transfers and isomerizes the ribose moiety from AdoMet to the 7-aminomethyl group of 7-deazaguanine (preQ1-tRNA) to give epoxyqueuosine (oQ-tRNA). In Bacillus thuringiensis subsp. konkukian (strain 97-27), this protein is S-adenosylmethionine:tRNA ribosyltransferase-isomerase.